Reading from the N-terminus, the 177-residue chain is Inner membrane-spanning protein YciB (177 aa).

5 consecutive transmembrane segments (helical) span residues 22 to 42 (IFIASGSLIVISGLICIIHWI), 50 to 70 (ISLFSFLSVFFFGSLTIFFHN), 76 to 96 (WKITIIYIIFSLVLLISQFFT), 121 to 141 (FIWSLFFLFCAILNIYIAYYF), and 149 to 169 (FKVFGFTSLTFFLILITSIYI).

The protein belongs to the YciB family.

It is found in the cell inner membrane. Functionally, plays a role in cell envelope biogenesis, maintenance of cell envelope integrity and membrane homeostasis. In Buchnera aphidicola subsp. Acyrthosiphon pisum (strain 5A), this protein is Inner membrane-spanning protein YciB.